The primary structure comprises 68 residues: Beta-defensin 1 (68 aa).

Residues 1 to 21 form the signal peptide; the sequence is MRTSYLLLFTLCLLLSEMASG. Positions 22-32 are excised as a propeptide; sequence GNFLTGLGHRS. 3 disulfides stabilise this stretch: cysteine 37–cysteine 66, cysteine 44–cysteine 59, and cysteine 49–cysteine 67.

Belongs to the beta-defensin family. Monomer. Homodimer.

The protein localises to the secreted. It localises to the membrane. Functionally, has bactericidal activity. May act as a ligand for C-C chemokine receptor CCR6. Positively regulates the sperm motility and bactericidal activity in a CCR6-dependent manner. Binds to CCR6 and triggers Ca2+ mobilization in the sperm which is important for its motility. This chain is Beta-defensin 1 (DEFB1), found in Pongo pygmaeus (Bornean orangutan).